A 411-amino-acid polypeptide reads, in one-letter code: Arginine deiminase (411 aa).

Cysteine 401 acts as the Amidino-cysteine intermediate in catalysis.

Belongs to the arginine deiminase family.

It localises to the cytoplasm. The catalysed reaction is L-arginine + H2O = L-citrulline + NH4(+). Its pathway is amino-acid degradation; L-arginine degradation via ADI pathway; carbamoyl phosphate from L-arginine: step 1/2. This is Arginine deiminase from Staphylococcus aureus (strain bovine RF122 / ET3-1).